The following is a 444-amino-acid chain: Acyl-CoA 6-desaturase (444 aa).

Residues 1–131 lie on the Cytoplasmic side of the membrane; sequence MGKGGNQGEG…DMNLFKTNHV (131 aa). The Cytochrome b5 heme-binding domain maps to 18–95; the sequence is VPTFSWEEIQ…LKPLLIGELA (78 aa). A helical transmembrane segment spans residues 132-152; the sequence is FFLLLLAHIIALESIAWFTVF. The Lumenal segment spans residues 153 to 157; sequence YFGNG. Residues 158–178 form a helical membrane-spanning segment; it reads WIPTLITAFVLATSQAQAGWL. Residues 179–264 are Cytoplasmic-facing; that stretch reads QHDYGHLSVY…KYLPYNHQHE (86 aa). The Histidine box-1 signature appears at 180 to 184; that stretch reads HDYGH. Positions 217 to 221 match the Histidine box-2 motif; sequence HFQHH. Residues 265 to 285 form a helical membrane-spanning segment; sequence YFFLIGPPLLIPMYFQYQIIM. Topologically, residues 286-305 are lumenal; the sequence is TMIVHKNWVDLAWAVSYYIR. The chain crosses the membrane as a helical span at residues 306–326; it reads FFITYIPFYGILGALLFLNFI. Topologically, residues 327–444 are cytoplasmic; that stretch reads RFLESHWFVW…KLWLDAYLHK (118 aa). A Histidine box-3 motif is present at residues 382-386; the sequence is QIEHH.

It belongs to the fatty acid desaturase type 1 family. Expressed in a wide array of tissues, highest expression is found in liver followed by brain, lung, heart, and retina. A lower level is found in breast tumor when compared with normal tissues; lowest levels were found in patients with poor prognostic index.

The protein localises to the endoplasmic reticulum membrane. The enzyme catalyses (9Z,12Z)-octadecadienoyl-CoA + 2 Fe(II)-[cytochrome b5] + O2 + 2 H(+) = (6Z,9Z,12Z)-octadecatrienoyl-CoA + 2 Fe(III)-[cytochrome b5] + 2 H2O. It carries out the reaction (9Z,12Z,15Z)-octadecatrienoyl-CoA + 2 Fe(II)-[cytochrome b5] + O2 + 2 H(+) = (6Z,9Z,12Z,15Z)-octadecatetraenoyl-CoA + 2 Fe(III)-[cytochrome b5] + 2 H2O. It catalyses the reaction hexadecanoyl-CoA + 2 Fe(II)-[cytochrome b5] + O2 + 2 H(+) = (6Z)-hexadecenoyl-CoA + 2 Fe(III)-[cytochrome b5] + 2 H2O. The catalysed reaction is (9Z,12Z,15Z,18Z,21Z)-tetracosapentaenoyl-CoA + 2 Fe(II)-[cytochrome b5] + O2 + 2 H(+) = (6Z,9Z,12Z,15Z,18Z,21Z)-tetracosahexaenoyl-CoA + 2 Fe(III)-[cytochrome b5] + 2 H2O. The enzyme catalyses (11E)-octadecenoyl-CoA + 2 Fe(II)-[cytochrome b5] + O2 + 2 H(+) = (6Z,11E)-octadecadienoyl-CoA + 2 Fe(III)-[cytochrome b5] + 2 H2O. It carries out the reaction (11Z,14Z)-eicosadienoyl-CoA + 2 Fe(II)-[cytochrome b5] + O2 + 2 H(+) = (8Z,11Z,14Z)-eicosatrienoyl-CoA + 2 Fe(III)-[cytochrome b5] + 2 H2O. It catalyses the reaction (11Z,14Z,17Z)-eicosatrienoyl-CoA + 2 Fe(II)-[cytochrome b5] + O2 + 2 H(+) = (8Z,11Z,14Z,17Z)-eicosatetraenoyl-CoA + 2 Fe(III)-[cytochrome b5] + 2 H2O. It functions in the pathway lipid metabolism; polyunsaturated fatty acid biosynthesis. Its function is as follows. Involved in the biosynthesis of highly unsaturated fatty acids (HUFA) from the essential polyunsaturated fatty acids (PUFA) linoleic acid (LA) (18:2n-6) and alpha-linolenic acid (ALA) (18:3n-3) precursors, acting as a fatty acyl-coenzyme A (CoA) desaturase that introduces a cis double bond at carbon 6 of the fatty acyl chain. Catalyzes the first and rate limiting step in this pathway which is the desaturation of LA (18:2n-6) and ALA (18:3n-3) into gamma-linoleate (GLA) (18:3n-6) and stearidonate (18:4n-3), respectively. Subsequently, in the biosynthetic pathway of HUFA n-3 series, it desaturates tetracosapentaenoate (24:5n-3) to tetracosahexaenoate (24:6n-3), which is then converted to docosahexaenoate (DHA)(22:6n-3), an important lipid for nervous system function. Desaturates hexadecanate (palmitate) to produce 6Z-hexadecenoate (sapienate), a fatty acid unique to humans and major component of human sebum, that has been implicated in the development of acne and may have potent antibacterial activity. It can also desaturate (11E)-octadecenoate (trans-vaccenoate, the predominant trans fatty acid in human milk) at carbon 6 generating (6Z,11E)-octadecadienoate. In addition to Delta-6 activity, this enzyme exhibits Delta-8 activity with slight biases toward n-3 fatty acyl-CoA substrates. The sequence is that of Acyl-CoA 6-desaturase from Homo sapiens (Human).